The chain runs to 486 residues: MLPMAILPNGDRWCHGCRQRYLRSRFPIFSVDGSRTLPTCPYKWPNGQGDVAKFLQGIENRDLWEKEHGQIYRIWSGMKSEVVLTQPSHLQAVFRDSNKHSKAENNNSGYLMSELLGQCVGLVSRERWRTLRAVTEIPFQHDKMPSYLELIQRHTRHHFDRLLASGDLRQERIHPAQDLKMLPFWVVAEIFYGECDAEMKTELQQLCVLREDLFKRMIQGGIVRWQWSKYLPTATNRALAEFQRRWRAFNQRAYDRACQQQRILPIVLMIEAAREGSTSVEQIYQTIDEALFANLDVTTGGISWNLVFFAAHSDIQERVRQEVLSATDHDAYLLSSSTLLAACISESARLKPLAAFTVPQSAPTDRIIGGYNIPAGTNLVVDTYALNIRNGFWGADSQCYRPDRFLEHRATELRYQYWRFGFGPRQCMGRYVADLVIRTLLAHLVAHYELGWVEPDPGKNSTWQRDLESWITIPDLQLRCVQRRND.

Cys427 serves as a coordination point for heme.

It belongs to the cytochrome P450 family. Heme serves as cofactor.

It participates in mycotoxin biosynthesis. Functionally, cytochrome P450 monooxygenase; part of the gene cluster that mediates the biosynthesis of aspirochlorine (or antibiotic A30641), an unusual halogenated spiro compound with distinctive antifungal properties due to selective inhibition of protein biosynthesis, and which is also active against bacteria, viruses, and murine tumor cells. The non-ribosomal peptide synthetase (NRPS) aclP is responsible the formation of the diketopiperazine (DKP) core from the condensation of 2 phenylalanine residues. One Phe residue is tailored into chlorotyrosine by hydroxylation and chlorination, whereas the second Phe undergoes an unprecedented C-C bond cleavage to be converted into glycine. After formation of the DKP, sulfur is incorporated into the DKP by conjugation with glutathione by aclG, followed by its stepwise degradation to the thiol by aclI, aclJ and aclK, and the dithiol oxidation by aclT. In addition, oxygenases (aclB, aclC, aclL and aclO) and O-methyltransferases (aclM and aclU) act as tailoring enzymes to produce the intermediate dechloroaspirochlorine. Ultimately, chlorination of dechloroaspirochlorine by the halogenase aclH is the last step in the aspirochlorine pathway. The protein is Cytochrome P450 monooxygenase aclC of Aspergillus oryzae (strain ATCC 42149 / RIB 40) (Yellow koji mold).